The primary structure comprises 320 residues: Endolytic peptidoglycan transglycosylase RlpA (320 aa).

Belongs to the RlpA family.

Its function is as follows. Lytic transglycosylase with a strong preference for naked glycan strands that lack stem peptides. The polypeptide is Endolytic peptidoglycan transglycosylase RlpA (Rickettsia typhi (strain ATCC VR-144 / Wilmington)).